Reading from the N-terminus, the 286-residue chain is Plasma membrane ascorbate-dependent reductase CYBRD1 (286 aa).

Topologically, residues 1–7 (MAMEGYR) are cytoplasmic. A helical membrane pass occupies residues 8–32 (GFLGLLVSALLVGFLSVIFVLIWVL). Positions 15-220 (SALLVGFLSV…FGALIFWIVT (206 aa)) constitute a Cytochrome b561 domain. The Extracellular portion of the chain corresponds to 33–47 (HFREGLGWDGGALEF). Residues 48–69 (NWHPVLAVTGFVFIQGIAIIVY) form a helical membrane-spanning segment. Positions 50, 70, and 79 each coordinate heme b. Residues 70–78 (RLPWTWKCS) lie on the Cytoplasmic side of the membrane. L-ascorbate is bound by residues Lys-79 and Lys-83. Residues 79–105 (KFLMKSIHAGLNAVAAILAIISVVAVF) form a helical membrane-spanning segment. His-86 lines the heme b pocket. Residues 106–118 (DYHNVRKIPHMYS) are Extracellular-facing. Position 108 (His-108) interacts with Fe(3+). Heme b contacts are provided by residues 115–118 (HMYS) and His-120. Residues 119 to 144 (LHSWVGLTVLILYIQQLVVGFFIFLL) form a helical membrane-spanning segment. Over 145 to 151 (PWAPPSL) the chain is Cytoplasmic. Residue Arg-152 coordinates L-ascorbate. Residues 152–179 (RAIVMPIHVYSGLLLFGTVIATVLMGVT) form a helical membrane-spanning segment. 2 residues coordinate heme b: His-159 and Glu-180. Over 180–197 (EKLFFVLKNPSYHSFPPE) the chain is Extracellular. Residues 198-222 (GVFTNTLGLLILVFGALIFWIVTRP) traverse the membrane as a helical segment. At 223–286 (QWKRPREPGS…LVDTGQRSTM (64 aa)) the chain is on the cytoplasmic side. Lys-225 serves as a coordination point for heme b. Phosphoserine is present on Ser-232. Thr-285 carries the phosphothreonine modification.

In terms of assembly, homodimer. Heme b is required as a cofactor. Highly expressed in all regions of the small intestine and colon studied in suckling animals. However, after weaning, when iron absorption declines significantly, strong expression is retained only in the duodenum. Also expressed in respiratory epithelium.

The protein localises to the cell membrane. Its subcellular location is the apical cell membrane. It catalyses the reaction Fe(3+)(out) + L-ascorbate(in) = monodehydro-L-ascorbate radical(in) + Fe(2+)(out) + H(+). The enzyme catalyses Cu(2+)(out) + L-ascorbate(in) = Cu(+)(out) + monodehydro-L-ascorbate radical(in) + H(+). It carries out the reaction monodehydro-L-ascorbate radical(out) + L-ascorbate(in) = monodehydro-L-ascorbate radical(in) + L-ascorbate(out). Its function is as follows. Plasma membrane reductase that uses cytoplasmic ascorbate as an electron donor to reduce extracellular Fe(3+) into Fe(2+). Probably functions in dietary iron absorption at the brush border of duodenal enterocytes by producing Fe(2+), the divalent form of iron that can be transported into enterocytes. It is also able to reduce extracellular monodehydro-L-ascorbate and may be involved in extracellular ascorbate regeneration by erythrocytes in blood. May also act as a ferrireductase in airway epithelial cells. May also function as a cupric transmembrane reductase. In Rattus norvegicus (Rat), this protein is Plasma membrane ascorbate-dependent reductase CYBRD1.